The following is a 370-amino-acid chain: Selenide, water dikinase 2 (370 aa).

The active site involves selenocysteine 24. Residue selenocysteine 24 is a non-standard amino acid, selenocysteine. ATP is bound by residues lysine 27, 55 to 57, aspartate 76, and aspartate 99; that span reads GMD. Aspartate 57 is a binding site for Mg(2+). Residues aspartate 99 and aspartate 258 each contribute to the Mg(2+) site.

The protein belongs to the selenophosphate synthase 1 family. Class I subfamily. As to quaternary structure, homodimer. Mg(2+) serves as cofactor. In terms of tissue distribution, first expressed in the midgut anlagen with subsequent expression in a variety of tissues including the gut and nervous system.

It catalyses the reaction hydrogenselenide + ATP + H2O = selenophosphate + AMP + phosphate + 2 H(+). Synthesizes selenophosphate from selenide and ATP. This is Selenide, water dikinase 2 (Sps2) from Drosophila melanogaster (Fruit fly).